The chain runs to 446 residues: DNA repair protein RadA (446 aa).

Residues C10–C27 form a C4-type zinc finger. G96–S103 contacts ATP. A RadA KNRFG motif motif is present at residues K253–G257. The interval D349–M446 is lon-protease-like.

This sequence belongs to the RecA family. RadA subfamily.

In terms of biological role, DNA-dependent ATPase involved in processing of recombination intermediates, plays a role in repairing DNA breaks. Stimulates the branch migration of RecA-mediated strand transfer reactions, allowing the 3' invading strand to extend heteroduplex DNA faster. Binds ssDNA in the presence of ADP but not other nucleotides, has ATPase activity that is stimulated by ssDNA and various branched DNA structures, but inhibited by SSB. Does not have RecA's homology-searching function. The sequence is that of DNA repair protein RadA from Campylobacter jejuni subsp. jejuni serotype O:2 (strain ATCC 700819 / NCTC 11168).